The chain runs to 256 residues: MAVGKNKRLSKGKKGLKKKVVDPFTRKDWFDIKAPSTFENRNVGKTLINRSTGLKNAADGLKGRVVEVSLADLQGSEDHSYRKIKLRVDEVQGKNLLTNFHGLDFTSDKLRSLVRKWQSLVEANVTVKTSDDYVLRVFAIAFTKRQANQIKKTTYAQSSKLREVRKKMIEIMQREVSNVTLAQLTSKLIPEVIGREIEKSTQTIFPLQNVHIRKVKLLKQPKFDLGALLALHGEGSTEEKGKKVNAGFKDVVLESV.

At Ala-2 the chain carries N-acetylalanine; partial.

The protein belongs to the eukaryotic ribosomal protein eS1 family. As to quaternary structure, component of the small ribosomal subunit. Mature ribosomes consist of a small (40S) and a large (60S) subunit. The 40S subunit contains about 33 different proteins and 1 molecule of RNA (18S). The 60S subunit contains about 49 different proteins and 3 molecules of RNA (25S, 5.8S and 5S).

It is found in the cytoplasm. This Scheffersomyces stipitis (strain ATCC 58785 / CBS 6054 / NBRC 10063 / NRRL Y-11545) (Yeast) protein is Small ribosomal subunit protein eS1B.